We begin with the raw amino-acid sequence, 125 residues long: Glutamyl-tRNA(Gln) amidotransferase subunit C, mitochondrial (125 aa).

Belongs to the GatC family. As to quaternary structure, subunit of the heterotrimeric GatCAB amidotransferase (AdT) complex, composed of A, B and C subunits.

The protein resides in the mitochondrion. It carries out the reaction L-glutamyl-tRNA(Gln) + L-glutamine + ATP + H2O = L-glutaminyl-tRNA(Gln) + L-glutamate + ADP + phosphate + H(+). Its function is as follows. Allows the formation of correctly charged Gln-tRNA(Gln) through the transamidation of misacylated Glu-tRNA(Gln) in the mitochondria. The reaction takes place in the presence of glutamine and ATP through an activated gamma-phospho-Glu-tRNA(Gln). The sequence is that of Glutamyl-tRNA(Gln) amidotransferase subunit C, mitochondrial from Drosophila mojavensis (Fruit fly).